The chain runs to 390 residues: Pepsin B (390 aa).

A signal peptide spans 1 to 16; the sequence is MKIQVLVLVCLHLSEG. Positions 17-59 are cleaved as a propeptide — activation peptide; the sequence is VERIILKKGKSIRQVMEERGVLETFLRNHPKVDPAAKYLFNND. Positions 74-387 constitute a Peptidase A1 domain; the sequence is YFGEISIGTP…DMAANRVGFA (314 aa). The active site involves aspartate 92. 2 disulfide bridges follow: cysteine 105/cysteine 110 and cysteine 269/cysteine 273. Aspartate 278 is a catalytic residue. The cysteines at positions 312 and 345 are disulfide-linked.

It belongs to the peptidase A1 family.

The protein resides in the secreted. It carries out the reaction Degradation of gelatin, little activity on hemoglobin. Specificity on B chain of insulin more restricted than that of pepsin A. Does not cleave 1-Phe-|-Val-2, 4-Gln-|-His-5 or 23-Gly-|-Phe-24.. In terms of biological role, hydrolyzes various peptides including beta-endorphin, insulin B chain, dynorphin A, and neurokinin A, with high specificity for the cleavage of the Phe-Xaa bonds. The sequence is that of Pepsin B (PGB) from Canis lupus familiaris (Dog).